Here is a 444-residue protein sequence, read N- to C-terminus: tRNA modification GTPase MnmE (444 aa).

Residues Arg23, Glu82, and Lys121 each coordinate (6S)-5-formyl-5,6,7,8-tetrahydrofolate. The TrmE-type G domain maps to 216–365 (GTSIVLAGLP…LKQALQKWLN (150 aa)). Residue Asn226 participates in K(+) binding. Residues 226-231 (NAGKSS), 245-251 (TDIPGTT), and 270-273 (DSAG) contribute to the GTP site. Residue Ser230 participates in Mg(2+) binding. Residues Thr245, Ile247, and Thr250 each contribute to the K(+) site. Thr251 serves as a coordination point for Mg(2+). Lys444 provides a ligand contact to (6S)-5-formyl-5,6,7,8-tetrahydrofolate.

Belongs to the TRAFAC class TrmE-Era-EngA-EngB-Septin-like GTPase superfamily. TrmE GTPase family. As to quaternary structure, homodimer. Heterotetramer of two MnmE and two MnmG subunits. It depends on K(+) as a cofactor.

The protein resides in the cytoplasm. Its function is as follows. Exhibits a very high intrinsic GTPase hydrolysis rate. Involved in the addition of a carboxymethylaminomethyl (cmnm) group at the wobble position (U34) of certain tRNAs, forming tRNA-cmnm(5)s(2)U34. The chain is tRNA modification GTPase MnmE from Chlamydia trachomatis serovar A (strain ATCC VR-571B / DSM 19440 / HAR-13).